Consider the following 396-residue polypeptide: S-adenosylmethionine synthase (396 aa).

His-15 serves as a coordination point for ATP. Asp-17 is a binding site for Mg(2+). Position 43 (Glu-43) interacts with K(+). 2 residues coordinate L-methionine: Glu-56 and Gln-99. The segment at Gln-99 to Arg-109 is flexible loop. Residues Asp-175–Lys-177, Arg-241–Phe-242, Asp-250, Arg-256–Lys-257, Ala-273, and Lys-277 contribute to the ATP site. An L-methionine-binding site is contributed by Asp-250. Lys-281 is a binding site for L-methionine.

Belongs to the AdoMet synthase family. Homotetramer; dimer of dimers. Mg(2+) is required as a cofactor. K(+) serves as cofactor.

The protein resides in the cytoplasm. It catalyses the reaction L-methionine + ATP + H2O = S-adenosyl-L-methionine + phosphate + diphosphate. It functions in the pathway amino-acid biosynthesis; S-adenosyl-L-methionine biosynthesis; S-adenosyl-L-methionine from L-methionine: step 1/1. Its function is as follows. Catalyzes the formation of S-adenosylmethionine (AdoMet) from methionine and ATP. The overall synthetic reaction is composed of two sequential steps, AdoMet formation and the subsequent tripolyphosphate hydrolysis which occurs prior to release of AdoMet from the enzyme. The sequence is that of S-adenosylmethionine synthase from Desulfitobacterium hafniense (strain DSM 10664 / DCB-2).